A 176-amino-acid chain; its full sequence is Large ribosomal subunit protein uL6 (176 aa).

This sequence belongs to the universal ribosomal protein uL6 family. Part of the 50S ribosomal subunit.

This protein binds to the 23S rRNA, and is important in its secondary structure. It is located near the subunit interface in the base of the L7/L12 stalk, and near the tRNA binding site of the peptidyltransferase center. The polypeptide is Large ribosomal subunit protein uL6 (Dechloromonas aromatica (strain RCB)).